The primary structure comprises 732 residues: Catalase-peroxidase (732 aa).

The tryptophyl-tyrosyl-methioninium (Trp-Tyr) (with M-246) cross-link spans 97-220 (WHSAGTYRTG…LAAVQMGLIY (124 aa)). Catalysis depends on His-98, which acts as the Proton acceptor. The tryptophyl-tyrosyl-methioninium (Tyr-Met) (with W-97) cross-link spans 220–246 (YVNPEGPDGKPDPVAAGKDIRETFGRM). Heme b is bound at residue His-261.

This sequence belongs to the peroxidase family. Peroxidase/catalase subfamily. Homodimer or homotetramer. Heme b serves as cofactor. In terms of processing, formation of the three residue Trp-Tyr-Met cross-link is important for the catalase, but not the peroxidase activity of the enzyme.

It catalyses the reaction H2O2 + AH2 = A + 2 H2O. It carries out the reaction 2 H2O2 = O2 + 2 H2O. Its function is as follows. Bifunctional enzyme with both catalase and broad-spectrum peroxidase activity. This Chlorobium phaeobacteroides (strain BS1) protein is Catalase-peroxidase.